Reading from the N-terminus, the 132-residue chain is Ribonuclease P protein component 2 (132 aa).

This sequence belongs to the eukaryotic/archaeal RNase P protein component 2 family. As to quaternary structure, consists of a catalytic RNA component and at least 4-5 protein subunits.

The protein localises to the cytoplasm. The enzyme catalyses Endonucleolytic cleavage of RNA, removing 5'-extranucleotides from tRNA precursor.. Its function is as follows. Part of ribonuclease P, a protein complex that generates mature tRNA molecules by cleaving their 5'-ends. The chain is Ribonuclease P protein component 2 from Methanosarcina acetivorans (strain ATCC 35395 / DSM 2834 / JCM 12185 / C2A).